We begin with the raw amino-acid sequence, 180 residues long: Translation initiation factor IF-3 (180 aa).

Belongs to the IF-3 family. Monomer.

The protein resides in the cytoplasm. In terms of biological role, IF-3 binds to the 30S ribosomal subunit and shifts the equilibrium between 70S ribosomes and their 50S and 30S subunits in favor of the free subunits, thus enhancing the availability of 30S subunits on which protein synthesis initiation begins. In Mesoplasma florum (strain ATCC 33453 / NBRC 100688 / NCTC 11704 / L1) (Acholeplasma florum), this protein is Translation initiation factor IF-3.